The sequence spans 357 residues: MKKLLALFVIAPILISCTSNKNSEYREEYIKDTNGFDILMGQFAHNIENIWGLHEVLIAGPKDYVKYTDQYRTRSHINFEAGTITIETISPIDPTTYLRKAIITTLLMGDDPGSVDLYSDTNDIQISKEPFLYGQVMDNNGQPIRWEWRATHFADYLIANKLQKRQSGLHVIWSVTIQLVPNHLDKRAHKYLPLIRQASIKYGIDESLILAIMQIESSFNPYAVSRSDALGLMQVVQHTAGRDVFKMKGKSGQPSRSYLFDPENNIDAGTAYLSILQNSYLVDITNATSRRYAVITAYNGGAGSVLRVFSSDKKKAAQIINKMAPGDVYETLTTKHPSAESRRYLMKVNTAQKGYHH.

The first 16 residues, 1-16 (MKKLLALFVIAPILIS), serve as a signal peptide directing secretion. A lipid anchor (N-palmitoyl cysteine) is attached at cysteine 17. Cysteine 17 is lipidated: S-diacylglycerol cysteine.

This sequence belongs to the transglycosylase Slt family.

The protein resides in the cell outer membrane. It carries out the reaction Exolytic cleavage of the (1-&gt;4)-beta-glycosidic linkage between N-acetylmuramic acid (MurNAc) and N-acetylglucosamine (GlcNAc) residues in peptidoglycan, from either the reducing or the non-reducing ends of the peptidoglycan chains, with concomitant formation of a 1,6-anhydrobond in the MurNAc residue.. Its function is as follows. Murein-degrading enzyme. May play a role in recycling of muropeptides during cell elongation and/or cell division. In Photorhabdus laumondii subsp. laumondii (strain DSM 15139 / CIP 105565 / TT01) (Photorhabdus luminescens subsp. laumondii), this protein is Membrane-bound lytic murein transglycosylase C.